The following is a 594-amino-acid chain: ATPase family AAA domain-containing protein 3 (594 aa).

The interval 1-50 (MSWLFGLNKGQQGPPSVPGFPEPPSPPGGSGDGGDKNKPKDKWSNFDPTG) is disordered. Topologically, residues 1 to 242 (MSWLFGLNKG…FRAFISDWDK (242 aa)) are mitochondrial intermembrane. Residues 15-27 (PSVPGFPEPPSPP) are compositionally biased toward pro residues. The span at 33-44 (GGDKNKPKDKWS) shows a compositional bias: basic and acidic residues. Residues 51–213 (LERAAKAARE…RENIRLKAAE (163 aa)) adopt a coiled-coil conformation. A helical membrane pass occupies residues 243-260 (VTATVAGLSLLAVGIYTA). Residues 261 to 594 (KNATGVAGRY…LQPLLEGTPV (334 aa)) lie on the Mitochondrial matrix side of the membrane. 348-355 (GPPGTGKT) lines the ATP pocket. Basic and acidic residues predominate over residues 571 to 581 (EGKENAAKESG). Residues 571-594 (EGKENAAKESGKNPLQPLLEGTPV) form a disordered region.

It belongs to the AAA ATPase family.

It localises to the mitochondrion inner membrane. Its subcellular location is the mitochondrion matrix. It is found in the mitochondrion nucleoid. Essential for mitochondrial network organization, mitochondrial metabolism and cell growth at organism and cellular level. May play an important role in mitochondrial protein synthesis. May also participate in mitochondrial DNA replication. May bind to mitochondrial DNA D-loops and contribute to nucleoid stability. Required for enhanced channeling of cholesterol for hormone-dependent steroidogenesis. In Xenopus tropicalis (Western clawed frog), this protein is ATPase family AAA domain-containing protein 3 (atad3).